Here is a 218-residue protein sequence, read N- to C-terminus: Ribonuclease S-7 (218 aa).

The first 22 residues, 1–22, serve as a signal peptide directing secretion; the sequence is MLNSPLTSVLFVLLFVLSPIYG. Gln-32 contacts RNA. A disulfide bridge connects residues Cys-38 and Cys-43. The N-linked (GlcNAc...) asparagine glycan is linked to Asn-49. Residue His-53 coordinates RNA. His-53 (proton donor) is an active-site residue. N-linked (GlcNAc...) asparagine glycosylation occurs at Asn-59. Residues Cys-67 and Cys-116 are joined by a disulfide bond. RNA-binding positions include 91–92, Phe-105, 108–109, and 112–113; these read DL, HE, and KH. The active site involves Glu-109. The active-site Proton acceptor is the His-113. A glycan (N-linked (GlcNAc...) asparagine) is linked at Asn-162. Intrachain disulfides connect Cys-177/Cys-207 and Cys-190/Cys-201.

Belongs to the RNase T2 family.

The protein localises to the secreted. The protein resides in the extracellular space. It catalyses the reaction a ribonucleotidyl-ribonucleotide-RNA + H2O = a 3'-end 3'-phospho-ribonucleotide-RNA + a 5'-end dephospho-ribonucleoside-RNA + H(+). Functionally, self-incompatibility (SI) is the inherited ability of a flowering plant to prevent self-fertilization by discriminating between self and non-self pollen during pollination. In many species of the Solanaceae, self-incompatibility is controlled by the single, multiallelic locus S. This stylar glycoprotein is associated with expression of self-incompatibility in potato. The polypeptide is Ribonuclease S-7 (Nicotiana alata (Winged tobacco)).